An 882-amino-acid chain; its full sequence is Valine--tRNA ligase (882 aa).

Residues 45–55 (PNVTGSLHIGH) carry the 'HIGH' region motif. A 'KMSKS' region motif is present at residues 525–529 (KFSKS). Lys-528 provides a ligand contact to ATP. A coiled-coil region spans residues 812–881 (EGLIDVAKEK…VLKKGIQNLA (70 aa)).

It belongs to the class-I aminoacyl-tRNA synthetase family. ValS type 1 subfamily. In terms of assembly, monomer.

Its subcellular location is the cytoplasm. It catalyses the reaction tRNA(Val) + L-valine + ATP = L-valyl-tRNA(Val) + AMP + diphosphate. In terms of biological role, catalyzes the attachment of valine to tRNA(Val). As ValRS can inadvertently accommodate and process structurally similar amino acids such as threonine, to avoid such errors, it has a 'posttransfer' editing activity that hydrolyzes mischarged Thr-tRNA(Val) in a tRNA-dependent manner. This is Valine--tRNA ligase from Leptospira interrogans serogroup Icterohaemorrhagiae serovar Lai (strain 56601).